The primary structure comprises 337 residues: uncharacterized protein (337 aa).

Residues 1 to 10 are Cytoplasmic-facing; the sequence is MKLKINIRPN. The helical transmembrane segment at 11–31 threads the bilayer; that stretch reads EIIFLICIVVIFSFSYTLTYF. Residues 32–100 are Extracellular-facing; that stretch reads DSPIFKEHYI…LEKLFSFSDN (69 aa). Residues 101–121 form a helical membrane-spanning segment; that stretch reads ILIVLIIVQVIVGFLIFLLSV. Residues 122–197 lie on the Cytoplasmic side of the membrane; sequence EKLSKCNYQL…KILIIKKKRD (76 aa). Positions 148-167 are enriched in low complexity; sequence NNNNEDINNNNNNNNNNNNK. Residues 148-179 are disordered; that stretch reads NNNNEDINNNNNNNNNNNNKNKNDERNNEEIE. Residues 198–218 traverse the membrane as a helical segment; sequence ILLAIIIFFLVLLGVLTIIYV. Residues 219 to 285 lie on the Extracellular side of the membrane; sequence SFIPLNIRKA…SWSLDSGLFN (67 aa). The helical transmembrane segment at 286–306 threads the bilayer; the sequence is VKIVFFSTILIEFLTGCLILL. The Cytoplasmic portion of the chain corresponds to 307-337; sequence MKFKKDPNIVPLTKPSIASPTQIPHLFCIAK.

The protein localises to the membrane. This is an uncharacterized protein from Dictyostelium discoideum (Social amoeba).